Consider the following 371-residue polypeptide: ATP-dependent protease ATP-binding subunit-like protein AmiB (371 aa).

96-103 is an ATP binding site; sequence GPTGVGKT.

Belongs to the ClpX chaperone family. Mg(2+) serves as cofactor.

Functionally, unlikely to encode a regulatory protein. Has ATPase activity. AmiB and AmiS may act jointly into a two component ABC transporter system. The chain is ATP-dependent protease ATP-binding subunit-like protein AmiB (amiB) from Pseudomonas aeruginosa (strain ATCC 15692 / DSM 22644 / CIP 104116 / JCM 14847 / LMG 12228 / 1C / PRS 101 / PAO1).